We begin with the raw amino-acid sequence, 719 residues long: Probable disease resistance protein At4g14610 (719 aa).

A coiled-coil region spans residues 25–73 (SLPENLAALQKAIEVLKTKHDDVKRRVDKEEFLGRRHRLSQVQVEIERL). Residues 114–418 (EENLVAQVEE…NELEKILGCP (305 aa)) enclose the NB-ARC domain. Residue 156–163 (GMGGVGKT) participates in ATP binding. LRR repeat units lie at residues 400 to 421 (AVRRMSLMKNELEKILGCPTCP), 422 to 444 (QLTTLLLQKNHKLVNISGEFFRF), and 447 to 469 (NLVVLDLSWNSSLTGLPKKISEV).

The protein belongs to the disease resistance NB-LRR family.

Probable disease resistance protein. This is Probable disease resistance protein At4g14610 from Arabidopsis thaliana (Mouse-ear cress).